Here is a 398-residue protein sequence, read N- to C-terminus: Ornithine aminotransferase (398 aa).

At K256 the chain carries N6-(pyridoxal phosphate)lysine.

This sequence belongs to the class-III pyridoxal-phosphate-dependent aminotransferase family. OAT subfamily. The cofactor is pyridoxal 5'-phosphate.

The protein localises to the cytoplasm. It catalyses the reaction a 2-oxocarboxylate + L-ornithine = L-glutamate 5-semialdehyde + an L-alpha-amino acid. It functions in the pathway amino-acid biosynthesis; L-proline biosynthesis; L-glutamate 5-semialdehyde from L-ornithine: step 1/1. In terms of biological role, catalyzes the interconversion of ornithine to glutamate semialdehyde. The polypeptide is Ornithine aminotransferase (Halalkalibacterium halodurans (strain ATCC BAA-125 / DSM 18197 / FERM 7344 / JCM 9153 / C-125) (Bacillus halodurans)).